We begin with the raw amino-acid sequence, 330 residues long: Fructose-1,6-bisphosphatase class 1 (330 aa).

Mg(2+)-binding residues include Glu84, Asp103, Leu105, and Asp106. Residues Asp106–Ser109, Asn196, and Lys262 each bind substrate. Residue Glu268 coordinates Mg(2+).

This sequence belongs to the FBPase class 1 family. Homotetramer. Mg(2+) is required as a cofactor.

Its subcellular location is the cytoplasm. It carries out the reaction beta-D-fructose 1,6-bisphosphate + H2O = beta-D-fructose 6-phosphate + phosphate. Its pathway is carbohydrate biosynthesis; gluconeogenesis. This is Fructose-1,6-bisphosphatase class 1 from Shewanella sp. (strain ANA-3).